The sequence spans 159 residues: Probable carbonic anhydrase (159 aa).

Residues 33–35 (RGD) and 48–49 (QD) contribute to the substrate site. Zn(2+) is bound by residues His-54, His-71, and His-76.

This sequence belongs to the gamma-class carbonic anhydrase family. The cofactor is Zn(2+).

It catalyses the reaction hydrogencarbonate + H(+) = CO2 + H2O. In terms of biological role, probably reversibly hydrates carbon dioxide. The chain is Probable carbonic anhydrase from Methanocaldococcus jannaschii (strain ATCC 43067 / DSM 2661 / JAL-1 / JCM 10045 / NBRC 100440) (Methanococcus jannaschii).